The sequence spans 326 residues: MSEILLFSPQPLFSYTMNKYSRLYTNSNIRNTFFSEIGIGIAANSLLLLFHIFKFIRGQRSRLTDLPIGLLSLIHLLKLLMIAFIATDIFISWRGWDDIICKFLVYLYRSFRGLSLCTTCMLSVLQAITLSPRSSCLAKFKHKSPHHVSCAILSLSVLYMFISSHLLVSLIATPNLTTNVFMYVSESCSILPMSYLMQSMFSTLLAIRDVFLISLMVLSTCYMVALLCRHRKQTRHLQGTSLSPKASPEKKATHSILMLMSFFVLMSILDSIVSCSRTMFLYDPTSYAIQIFVSHIYATVSPFVFMSNEKHIVNFLRSLCKRVINV.

Residues 1-32 (MSEILLFSPQPLFSYTMNKYSRLYTNSNIRNT) lie on the Extracellular side of the membrane. A helical membrane pass occupies residues 33–53 (FFSEIGIGIAANSLLLLFHIF). The Cytoplasmic portion of the chain corresponds to 54 to 65 (KFIRGQRSRLTD). Residues 66 to 86 (LPIGLLSLIHLLKLLMIAFIA) traverse the membrane as a helical segment. Residues 87–110 (TDIFISWRGWDDIICKFLVYLYRS) lie on the Extracellular side of the membrane. A disulfide bridge connects residues Cys101 and Cys188. Residues 111-130 (FRGLSLCTTCMLSVLQAITL) traverse the membrane as a helical segment. At 131–150 (SPRSSCLAKFKHKSPHHVSC) the chain is on the cytoplasmic side. Residues 151 to 171 (AILSLSVLYMFISSHLLVSLI) form a helical membrane-spanning segment. At 172-203 (ATPNLTTNVFMYVSESCSILPMSYLMQSMFST) the chain is on the extracellular side. N-linked (GlcNAc...) asparagine glycosylation occurs at Asn175. A helical membrane pass occupies residues 204-224 (LLAIRDVFLISLMVLSTCYMV). Residues 225 to 254 (ALLCRHRKQTRHLQGTSLSPKASPEKKATH) are Cytoplasmic-facing. A helical membrane pass occupies residues 255–275 (SILMLMSFFVLMSILDSIVSC). Over 276–285 (SRTMFLYDPT) the chain is Extracellular. The chain crosses the membrane as a helical span at residues 286–306 (SYAIQIFVSHIYATVSPFVFM). The Cytoplasmic segment spans residues 307–326 (SNEKHIVNFLRSLCKRVINV).

Belongs to the G-protein coupled receptor 1 family.

Its subcellular location is the cell membrane. Its function is as follows. Putative pheromone receptor implicated in the regulation of social as well as reproductive behavior. The sequence is that of Vomeronasal type-1 receptor 94 (Vom1r94) from Rattus norvegicus (Rat).